The sequence spans 149 residues: Probable flagellum biosynthesis repressor protein FlbT (149 aa).

Belongs to the FlbT family.

Its function is as follows. Has a post-transcriptional repressor function in flagellum biogenesis. Associates with the 5'-UTR of fljK mRNA and promotes its degradation. The chain is Probable flagellum biosynthesis repressor protein FlbT from Rhizobium leguminosarum bv. trifolii (strain WSM2304).